A 204-amino-acid chain; its full sequence is Ancillary SecYEG translocon subunit (204 aa).

Topologically, residues 1 to 23 (MAYTIEEEQELTAIKAWWNENYK) are cytoplasmic. A helical transmembrane segment spans residues 24–44 (FIIVCFVIAFGGVFGWNYWQS). Topologically, residues 45 to 204 (HQIQKMHKAS…QLIQVRLNNL (160 aa)) are periplasmic.

Belongs to the YfgM family. Interacts with the SecYEG translocon. Forms a complex with PpiD.

It localises to the cell inner membrane. Its function is as follows. May mediate protein transfer from the SecYEG translocon to the periplasmic chaperone network via its periplasmic C-terminal region. This chain is Ancillary SecYEG translocon subunit (1057), found in Aggregatibacter actinomycetemcomitans (Actinobacillus actinomycetemcomitans).